The following is a 153-amino-acid chain: Cytochrome c oxidase subunit 5A, mitochondrial (153 aa).

The transit peptide at 1-20 directs the protein to the mitochondrion; it reads MLRNTFTRAGGLSRITSVRF. Residues 21-88 are Mitochondrial matrix-facing; sequence AQTHALSNAA…EWGPRRPVLN (68 aa). The chain crosses the membrane as a helical span at residues 89 to 111; the sequence is KGDSSFIAKGVAAGLLFSVGLFA. Residues 112 to 153 are Mitochondrial intermembrane-facing; it reads VVRMAGGQDAKTMNKEWQLKSDEYLKSKNANPWGGYSQVQSK.

Belongs to the cytochrome c oxidase IV family. In terms of assembly, component of the cytochrome c oxidase (complex IV, CIV), a multisubunit enzyme composed of 12 subunits. The complex is composed of a catalytic core of 3 subunits COX1, COX2 and COX3, encoded in the mitochondrial DNA, and 9 supernumerary subunits COX4, COX5A (or COX5B), COX6, COX7, COX8, COX9, COX12, COX13 and COX26, which are encoded in the nuclear genome. COX5A is the predominant subunit V during aerobic/normoxic growth, it gets replaced by COX5B under anaerobic/hypoxic conditions. The complex exists as a monomer or a dimer and forms supercomplexes (SCs) in the inner mitochondrial membrane with a dimer of ubiquinol-cytochrome c oxidoreductase (cytochrome b-c1 complex, complex III, CIII), resulting in 2 different assemblies (supercomplexes III(2)IV and III(2)IV(2)). COX5A interacts with COR1, CYT1 and QCR6 at the CIII-CIV interface.

Its subcellular location is the mitochondrion inner membrane. Its pathway is energy metabolism; oxidative phosphorylation. Functionally, component of the cytochrome c oxidase, the last enzyme in the mitochondrial electron transport chain which drives oxidative phosphorylation. The respiratory chain contains 3 multisubunit complexes succinate dehydrogenase (complex II, CII), ubiquinol-cytochrome c oxidoreductase (cytochrome b-c1 complex, complex III, CIII) and cytochrome c oxidase (complex IV, CIV), that cooperate to transfer electrons derived from NADH and succinate to molecular oxygen, creating an electrochemical gradient over the inner membrane that drives transmembrane transport and the ATP synthase. Cytochrome c oxidase is the component of the respiratory chain that catalyzes the reduction of oxygen to water. Electrons originating from reduced cytochrome c in the intermembrane space (IMS) are transferred via the dinuclear copper A center (CU(A)) of COX2 and heme A of COX1 to the active site in COX1, a binuclear center (BNC) formed by heme A3 and copper B (CU(B)). The BNC reduces molecular oxygen to 2 water molecules using 4 electrons from cytochrome c in the IMS and 4 protons from the mitochondrial matrix. In Saccharomyces cerevisiae (strain ATCC 204508 / S288c) (Baker's yeast), this protein is Cytochrome c oxidase subunit 5A, mitochondrial (COX5A).